Consider the following 838-residue polypeptide: DNA gyrase subunit A (838 aa).

Residue Thr2 is modified to N-acetylthreonine. The Topo IIA-type catalytic domain maps to 41–510 (LPEVRDGLKP…ADGDVSDEDL (470 aa)). The O-(5'-phospho-DNA)-tyrosine intermediate role is filled by Tyr129. Ca(2+)-binding residues include Asp504, Ser506, Glu508, and Asp515. Positions 504–516 (DVSDEDLIAREDV) constitute an EF-hand domain. The interval 514 to 838 (EDVVVTITET…DANGADQTGN (325 aa)) is C-terminal domain CTD. A GyrA-box motif is present at residues 537–543 (QKRGGKG). The GyrA-box-1 signature appears at 743–749 (QGRGGKG).

The protein belongs to the type II topoisomerase GyrA/ParC subunit family. In terms of assembly, heterotetramer, composed of two GyrA and two GyrB chains. In the heterotetramer, GyrA contains the active site tyrosine that forms a transient covalent intermediate with DNA, while GyrB binds cofactors and catalyzes ATP hydrolysis. Requires Ca(2+) as cofactor.

Its subcellular location is the cytoplasm. The enzyme catalyses ATP-dependent breakage, passage and rejoining of double-stranded DNA.. DNA supercoiling inhibited by (fluoro)quinoline antibiotics such as sparfloxacin and levofloxacin, which usually act on GyrA. DNA supercoiling inhibited by the coumarin antibiotic novobiocin which acts on GyrB. Quinolones lead to gyrase-mediated dsDNA cleavage while preventing reclosure. DNA supercoiling activity inhibited by aminopyrazinamide and pyrrolamide derivatives, probably via effects on the GyrB subunit. DNA relaxation inhibited by ATP and its analogs. DNA supercoiling, relaxation, decatenation and quinolone-promoted DNA cleavage are inhibited by MfpA (50% inhibition occurs at 2 uM), inhibition of gyrase activities is enhanced in a concentration-dependent manner by MfpA. A type II topoisomerase that negatively supercoils closed circular double-stranded (ds) DNA in an ATP-dependent manner to maintain chromosomes in an underwound state, while in the absence of ATP it relaxes supercoiled dsDNA. Also catalyzes the interconversion of other topological isomers of dsDNA rings, including catenanes. Gyrase from M.tuberculosis has higher decatenation than supercoiling activity compared to E.coli; as M.tuberculosis only has 1 type II topoisomerase, gyrase has to fulfill the decatenation function of topoisomerase IV as well. At comparable concentrations M.tuberculosis gyrase cannot introduce as many negative supercoils into DNA as the E.coli enzyme, and its ATPase activity is lower, perhaps because it does not couple DNA wrapping and ATP binding as well as E.coli. Functionally, negative supercoiling favors strand separation, and DNA replication, transcription, recombination and repair, all of which involve strand separation. Type II topoisomerases break and join 2 DNA strands simultaneously in an ATP-dependent manner. In Mycobacterium tuberculosis (strain ATCC 25618 / H37Rv), this protein is DNA gyrase subunit A.